Here is a 132-residue protein sequence, read N- to C-terminus: MVAENQYYGTGRRKSSSARVFMSKNGSGNIIINKRNIDQYFGRETARMVVLQPLELFDMVSKVDVYVTVKGGGISGQAGAIRHGLTCALMKYNELLRVDLRKAGFVTRDARKVERKKVGLHKARRRPQFSKR.

The protein belongs to the universal ribosomal protein uS9 family.

This Baumannia cicadellinicola subsp. Homalodisca coagulata protein is Small ribosomal subunit protein uS9.